Consider the following 361-residue polypeptide: MSKRIYNFNPGPAALPLSVLEEIQATFLDFAGTGMSITEVSHRSKPFDAIINDAVTRVKRLLGIGDDFKVLFVQGGASMQFAMVPMNLLPDGKSADYVNTGTWSTKAIKETKILGKTVNVAASSEDRNFAYIPKELSLDPNAAYVHITSNNTIKGTQWADFPDTKGVPIVSDMSSDILSRPLDMSKFGLIYAGAQKNIGPAGVCMVIVKNDLLEKANTGLPSMLAYKTYADSNSLYNTPPCFTIYAIDLVLKWLEETIGGLEKMDAVNREKAALLYDLFDASSFYNGTADADSRSLMNVTFRLPSEDLEKRFVEEATKNDLGGLKGHRSVGGCRASIYNAMSMEGIQALVDFMKEFERTNG.

Arginine 43 lines the L-glutamate pocket. Residues 77–78 (AS), tryptophan 103, threonine 152, aspartate 172, and glutamine 195 each bind pyridoxal 5'-phosphate. At lysine 196 the chain carries N6-(pyridoxal phosphate)lysine. 237–238 (NT) contributes to the pyridoxal 5'-phosphate binding site.

Belongs to the class-V pyridoxal-phosphate-dependent aminotransferase family. SerC subfamily. In terms of assembly, homodimer. Requires pyridoxal 5'-phosphate as cofactor.

It is found in the cytoplasm. The enzyme catalyses O-phospho-L-serine + 2-oxoglutarate = 3-phosphooxypyruvate + L-glutamate. It catalyses the reaction 4-(phosphooxy)-L-threonine + 2-oxoglutarate = (R)-3-hydroxy-2-oxo-4-phosphooxybutanoate + L-glutamate. Its pathway is amino-acid biosynthesis; L-serine biosynthesis; L-serine from 3-phospho-D-glycerate: step 2/3. The protein operates within cofactor biosynthesis; pyridoxine 5'-phosphate biosynthesis; pyridoxine 5'-phosphate from D-erythrose 4-phosphate: step 3/5. Functionally, catalyzes the reversible conversion of 3-phosphohydroxypyruvate to phosphoserine and of 3-hydroxy-2-oxo-4-phosphonooxybutanoate to phosphohydroxythreonine. The chain is Phosphoserine aminotransferase from Desulfosudis oleivorans (strain DSM 6200 / JCM 39069 / Hxd3) (Desulfococcus oleovorans).